The following is a 698-amino-acid chain: Topoisomerase subunit TopoN (698 aa).

Lysine 429 is covalently cross-linked (Isoglutamyl lysine isopeptide (Lys-Gln) (interchain with Q-Cter in protein Pup)). The tract at residues 443–473 (GAKARARAASKAKGLGTNLSLPPKLLPSRES) is disordered. One can recognise a Toprim domain in the interval 479–593 (AELFLCEGDS…AGMVYVTMPP (115 aa)).

This sequence belongs to the type II topoisomerase family. As to quaternary structure, a complex of TopoN and TopoM, possibly a heterotetramer. Mg(2+) is required as a cofactor.

The catalysed reaction is ATP-dependent breakage, passage and rejoining of double-stranded DNA.. Inhibited by quinolone antibiotic ciprofloxacin and coumarin antibiotic novobiocin, but at much higher concentrations than is usual for DNA gyrase/topoisomerase. In terms of biological role, catalyzes the relaxation of negatively supercoiled DNA in the presence of ATP or dATP but not other nucleotides. Individual subunits have no activity. Not able to negatively supercoil DNA, it can however introduce positive supercoils in DNA. Relaxes positive supercoils in an ATP-dependent manner. Catenates and decatenates DNA. Generates dsDNA breaks in the presence of the quinolone antibiotic ciprofloxacin, showing it is a topoisomerase. This is Topoisomerase subunit TopoN from Mycolicibacterium smegmatis (strain ATCC 700084 / mc(2)155) (Mycobacterium smegmatis).